Consider the following 369-residue polypeptide: Glutamate 5-kinase (369 aa).

Lys-9 lines the ATP pocket. Positions 49, 136, and 148 each coordinate substrate. ATP is bound by residues 168 to 169 (TD) and 210 to 216 (TGGMLTK). The PUA domain maps to 275-355 (QGEIYVDQGA…KGVVIHRDDW (81 aa)).

Belongs to the glutamate 5-kinase family.

It is found in the cytoplasm. It carries out the reaction L-glutamate + ATP = L-glutamyl 5-phosphate + ADP. The protein operates within amino-acid biosynthesis; L-proline biosynthesis; L-glutamate 5-semialdehyde from L-glutamate: step 1/2. Catalyzes the transfer of a phosphate group to glutamate to form L-glutamate 5-phosphate. This chain is Glutamate 5-kinase, found in Streptococcus sanguinis (strain SK36).